The primary structure comprises 143 residues: Putative 2'-deoxynucleoside 5'-phosphate N-hydrolase 1 (143 aa).

Residues H37, E82, and 106–108 (SAM) contribute to the substrate site.

This sequence belongs to the 2'-deoxynucleoside 5'-phosphate N-hydrolase 1 family. As to quaternary structure, monomer and homodimer.

The catalysed reaction is a pyrimidine 2'-deoxyribonucleoside 5'-phosphate + H2O = a pyrimidine nucleobase + 2-deoxy-D-ribose 5-phosphate. The enzyme catalyses a purine 2'-deoxyribonucleoside 5'-phosphate + H2O = a purine nucleobase + 2-deoxy-D-ribose 5-phosphate. Its function is as follows. Catalyzes the cleavage of the N-glycosidic bond of deoxyribonucleoside 5'-monophosphates to yield deoxyribose 5-phosphate and a purine or pyrimidine base. This is Putative 2'-deoxynucleoside 5'-phosphate N-hydrolase 1 from Thermofilum pendens (strain DSM 2475 / Hrk 5).